The chain runs to 155 residues: MQVKQIEGVLNAKDIRFALVVGRFNDFIGQKLVEGAIDCICRHGGSEECIAMYRCPGAFELPMVAKKVALSGKYDAIITLGVIIRGSTPHFDVLAAEATKGIAQVALDTMVPIAFGVLTTENIEQAIERAGTKAGNKGFDAAMTAIEMVNLYRQI.

5-amino-6-(D-ribitylamino)uracil-binding positions include Phe24, 58–60 (AFE), and 82–84 (VII). 87–88 (ST) is a binding site for (2S)-2-hydroxy-3-oxobutyl phosphate. His90 acts as the Proton donor in catalysis. Phe115 serves as a coordination point for 5-amino-6-(D-ribitylamino)uracil. (2S)-2-hydroxy-3-oxobutyl phosphate is bound at residue Arg129.

This sequence belongs to the DMRL synthase family.

It carries out the reaction (2S)-2-hydroxy-3-oxobutyl phosphate + 5-amino-6-(D-ribitylamino)uracil = 6,7-dimethyl-8-(1-D-ribityl)lumazine + phosphate + 2 H2O + H(+). It functions in the pathway cofactor biosynthesis; riboflavin biosynthesis; riboflavin from 2-hydroxy-3-oxobutyl phosphate and 5-amino-6-(D-ribitylamino)uracil: step 1/2. Functionally, catalyzes the formation of 6,7-dimethyl-8-ribityllumazine by condensation of 5-amino-6-(D-ribitylamino)uracil with 3,4-dihydroxy-2-butanone 4-phosphate. This is the penultimate step in the biosynthesis of riboflavin. This Pelodictyon phaeoclathratiforme (strain DSM 5477 / BU-1) protein is 6,7-dimethyl-8-ribityllumazine synthase.